The chain runs to 448 residues: Phosphohexose mutases (448 aa).

Residue S97 is the Phosphoserine intermediate of the active site. S97, D237, D239, and D241 together coordinate Mg(2+).

The protein belongs to the phosphohexose mutase family. Mg(2+) serves as cofactor.

The catalysed reaction is alpha-D-glucose 1-phosphate = alpha-D-glucose 6-phosphate. The enzyme catalyses alpha-D-mannose 1-phosphate = D-mannose 6-phosphate. Its pathway is nucleotide-sugar biosynthesis; GDP-alpha-D-mannose biosynthesis; alpha-D-mannose 1-phosphate from D-fructose 6-phosphate: step 2/2. Functionally, involved in xanthan production. In Xanthomonas campestris pv. campestris (strain ATCC 33913 / DSM 3586 / NCPPB 528 / LMG 568 / P 25), this protein is Phosphohexose mutases (xanA).